Reading from the N-terminus, the 501-residue chain is Probable cytochrome P450 6a20 (501 aa).

Residue cysteine 445 participates in heme binding.

It belongs to the cytochrome P450 family. The cofactor is heme.

Its subcellular location is the endoplasmic reticulum membrane. It localises to the microsome membrane. Functionally, may be involved in the metabolism of insect hormones and in the breakdown of synthetic insecticides. The chain is Probable cytochrome P450 6a20 (Cyp6a20) from Drosophila melanogaster (Fruit fly).